Here is a 684-residue protein sequence, read N- to C-terminus: DNA gyrase subunit B, novobiocin-sensitive (684 aa).

A disordered region spans residues 1-22 (MADSGNPNENTPSVATGENGEV). Positions 154–302 (VKTDGYRWTQ…RMLSVEIAMQ (149 aa)) are novobiocin-binding. In terms of domain architecture, Toprim spans 463–577 (CEIFIVEGDS…AGHVYLSRPP (115 aa)). The Mg(2+) site is built by Glu469, Asp542, and Asp544.

It belongs to the type II topoisomerase GyrB family. As to quaternary structure, heterotetramer, composed of two GyrA and two GyrB chains. In the heterotetramer, GyrA contains the active site tyrosine that forms a transient covalent intermediate with DNA, while GyrB binds cofactors and catalyzes ATP hydrolysis. Requires Mg(2+) as cofactor. It depends on Mn(2+) as a cofactor. Ca(2+) serves as cofactor.

The protein localises to the cytoplasm. It carries out the reaction ATP-dependent breakage, passage and rejoining of double-stranded DNA.. Its function is as follows. A type II topoisomerase that negatively supercoils closed circular double-stranded (ds) DNA in an ATP-dependent manner to modulate DNA topology and maintain chromosomes in an underwound state. Negative supercoiling favors strand separation, and DNA replication, transcription, recombination and repair, all of which involve strand separation. Also able to catalyze the interconversion of other topological isomers of dsDNA rings, including catenanes and knotted rings. Type II topoisomerases break and join 2 DNA strands simultaneously in an ATP-dependent manner. This Streptomyces niveus (Streptomyces spheroides) protein is DNA gyrase subunit B, novobiocin-sensitive.